The following is a 445-amino-acid chain: 6-phosphogluconate dehydrogenase, decarboxylating (445 aa).

Residues 1-4, 22-24, 63-65, and asparagine 91 each bind NADP(+); these read AVMG, NRS, and VKA. Substrate contacts are provided by residues asparagine 91 and 117-119; that span reads SGG. The active-site Proton acceptor is the lysine 172. 175–176 is a binding site for substrate; sequence HN. Glutamate 179 acts as the Proton donor in catalysis. 5 residues coordinate substrate: tyrosine 180, lysine 249, arginine 276, arginine 434, and histidine 440.

Belongs to the 6-phosphogluconate dehydrogenase family. Homodimer.

The enzyme catalyses 6-phospho-D-gluconate + NADP(+) = D-ribulose 5-phosphate + CO2 + NADPH. It participates in carbohydrate degradation; pentose phosphate pathway; D-ribulose 5-phosphate from D-glucose 6-phosphate (oxidative stage): step 3/3. Functionally, catalyzes the oxidative decarboxylation of 6-phosphogluconate to ribulose 5-phosphate and CO(2), with concomitant reduction of NADP to NADPH. This chain is 6-phosphogluconate dehydrogenase, decarboxylating (gnd), found in Shigella dysenteriae.